A 322-amino-acid chain; its full sequence is MLNSFKLSLQYILPKLWLTRLAGWGASKRAGWLTKLVIDLFVKYYKVDMKEAQKPDTASYRTFNEFFVRPLRDEVRPIDTDPNVLVMPADGVISQLGKIEENKILQAKGHNYSLEALLAGNYLMADLFRNGTFVTTYLSPRDYHRVHMPCNGILREMIYVPGDLFSVNHLTAQNVPNLFARNERVICLFDTEFGPMAQILVGATIVGSIETVWAGTITPPREGIIKRWTWPAGENDGSVALLKGQEMGRFKLGSTVINLFAPGKVNLVEQLESLSVTKIGQPLAVSTETFVTPDAEPAPLPAEEIEAEHDASPLVDDKKDQV.

Catalysis depends on charge relay system; for autoendoproteolytic cleavage activity residues aspartate 90, histidine 147, and serine 254. The active-site Schiff-base intermediate with substrate; via pyruvic acid; for decarboxylase activity is serine 254. Pyruvic acid (Ser); by autocatalysis is present on serine 254. Residues 293 to 322 form a disordered region; the sequence is PDAEPAPLPAEEIEAEHDASPLVDDKKDQV. Residues 308-322 show a composition bias toward basic and acidic residues; it reads EHDASPLVDDKKDQV.

It belongs to the phosphatidylserine decarboxylase family. PSD-B subfamily. Prokaryotic type I sub-subfamily. In terms of assembly, heterodimer of a large membrane-associated beta subunit and a small pyruvoyl-containing alpha subunit. Pyruvate serves as cofactor. Post-translationally, is synthesized initially as an inactive proenzyme. Formation of the active enzyme involves a self-maturation process in which the active site pyruvoyl group is generated from an internal serine residue via an autocatalytic post-translational modification. Two non-identical subunits are generated from the proenzyme in this reaction, and the pyruvate is formed at the N-terminus of the alpha chain, which is derived from the carboxyl end of the proenzyme. The autoendoproteolytic cleavage occurs by a canonical serine protease mechanism, in which the side chain hydroxyl group of the serine supplies its oxygen atom to form the C-terminus of the beta chain, while the remainder of the serine residue undergoes an oxidative deamination to produce ammonia and the pyruvoyl prosthetic group on the alpha chain. During this reaction, the Ser that is part of the protease active site of the proenzyme becomes the pyruvoyl prosthetic group, which constitutes an essential element of the active site of the mature decarboxylase.

Its subcellular location is the cell membrane. It carries out the reaction a 1,2-diacyl-sn-glycero-3-phospho-L-serine + H(+) = a 1,2-diacyl-sn-glycero-3-phosphoethanolamine + CO2. Its pathway is phospholipid metabolism; phosphatidylethanolamine biosynthesis; phosphatidylethanolamine from CDP-diacylglycerol: step 2/2. In terms of biological role, catalyzes the formation of phosphatidylethanolamine (PtdEtn) from phosphatidylserine (PtdSer). In Escherichia coli O9:H4 (strain HS), this protein is Phosphatidylserine decarboxylase proenzyme.